Here is a 150-residue protein sequence, read N- to C-terminus: MNTNTLLIENKKAKFNYFIEEKISCGIVLKGTEVKSIKAKKLSFNNSFAIIKKEELWLENLHVSKYKEGNIFNHDELRPRKLLIKKKELQRLKKFKEKEGYTLIPISFYLKKSIIKVEVGICKGKKLYDKREILKQKSIKKDLSREIKYK.

It belongs to the SmpB family.

Its subcellular location is the cytoplasm. Its function is as follows. Required for rescue of stalled ribosomes mediated by trans-translation. Binds to transfer-messenger RNA (tmRNA), required for stable association of tmRNA with ribosomes. tmRNA and SmpB together mimic tRNA shape, replacing the anticodon stem-loop with SmpB. tmRNA is encoded by the ssrA gene; the 2 termini fold to resemble tRNA(Ala) and it encodes a 'tag peptide', a short internal open reading frame. During trans-translation Ala-aminoacylated tmRNA acts like a tRNA, entering the A-site of stalled ribosomes, displacing the stalled mRNA. The ribosome then switches to translate the ORF on the tmRNA; the nascent peptide is terminated with the 'tag peptide' encoded by the tmRNA and targeted for degradation. The ribosome is freed to recommence translation, which seems to be the essential function of trans-translation. This chain is SsrA-binding protein, found in Borreliella afzelii (strain PKo) (Borrelia afzelii).